Consider the following 390-residue polypeptide: Succinate--CoA ligase [ADP-forming] subunit beta (390 aa).

The ATP-grasp domain maps to 9-245 (KHLLKKYNIP…TTQEDEHETM (237 aa)). ATP is bound by residues Lys46, 53-55 (GRG), Glu99, Ser102, and Glu107. Positions 200 and 214 each coordinate Mg(2+). Substrate contacts are provided by residues Asn265 and 322–324 (GIV).

It belongs to the succinate/malate CoA ligase beta subunit family. In terms of assembly, heterotetramer of two alpha and two beta subunits. Mg(2+) is required as a cofactor.

It catalyses the reaction succinate + ATP + CoA = succinyl-CoA + ADP + phosphate. It carries out the reaction GTP + succinate + CoA = succinyl-CoA + GDP + phosphate. Its pathway is carbohydrate metabolism; tricarboxylic acid cycle; succinate from succinyl-CoA (ligase route): step 1/1. In terms of biological role, succinyl-CoA synthetase functions in the citric acid cycle (TCA), coupling the hydrolysis of succinyl-CoA to the synthesis of either ATP or GTP and thus represents the only step of substrate-level phosphorylation in the TCA. The beta subunit provides nucleotide specificity of the enzyme and binds the substrate succinate, while the binding sites for coenzyme A and phosphate are found in the alpha subunit. This Coxiella burnetii (strain RSA 331 / Henzerling II) protein is Succinate--CoA ligase [ADP-forming] subunit beta.